We begin with the raw amino-acid sequence, 212 residues long: Large ribosomal subunit protein uL1 (212 aa).

This sequence belongs to the universal ribosomal protein uL1 family. As to quaternary structure, part of the 50S ribosomal subunit.

In terms of biological role, binds directly to 23S rRNA. Probably involved in E site tRNA release. Its function is as follows. Protein L1 is also a translational repressor protein, it controls the translation of its operon by binding to its mRNA. The sequence is that of Large ribosomal subunit protein uL1 from Haloquadratum walsbyi (strain DSM 16790 / HBSQ001).